The sequence spans 501 residues: Glutamyl-tRNA(Gln) amidotransferase subunit A (501 aa).

Active-site charge relay system residues include Lys-80 and Ser-155. The Acyl-ester intermediate role is filled by Ser-179.

The protein belongs to the amidase family. GatA subfamily. In terms of assembly, heterotrimer of A, B and C subunits.

It catalyses the reaction L-glutamyl-tRNA(Gln) + L-glutamine + ATP + H2O = L-glutaminyl-tRNA(Gln) + L-glutamate + ADP + phosphate + H(+). In terms of biological role, allows the formation of correctly charged Gln-tRNA(Gln) through the transamidation of misacylated Glu-tRNA(Gln) in organisms which lack glutaminyl-tRNA synthetase. The reaction takes place in the presence of glutamine and ATP through an activated gamma-phospho-Glu-tRNA(Gln). In Cutibacterium acnes (strain DSM 16379 / KPA171202) (Propionibacterium acnes), this protein is Glutamyl-tRNA(Gln) amidotransferase subunit A.